The following is a 197-amino-acid chain: Molybdenum cofactor guanylyltransferase (197 aa).

Residues 10–12 (LAG), lysine 23, asparagine 51, aspartate 69, and aspartate 99 each bind GTP. Aspartate 99 provides a ligand contact to Mg(2+).

The protein belongs to the MobA family. Monomer. It depends on Mg(2+) as a cofactor.

It localises to the cytoplasm. It catalyses the reaction Mo-molybdopterin + GTP + H(+) = Mo-molybdopterin guanine dinucleotide + diphosphate. In terms of biological role, transfers a GMP moiety from GTP to Mo-molybdopterin (Mo-MPT) cofactor (Moco or molybdenum cofactor) to form Mo-molybdopterin guanine dinucleotide (Mo-MGD) cofactor. This chain is Molybdenum cofactor guanylyltransferase, found in Shewanella sp. (strain ANA-3).